A 160-amino-acid chain; its full sequence is Large ribosomal subunit protein uL15 (160 aa).

Over residues M1–A13 the composition is skewed to basic and acidic residues. A disordered region spans residues M1–G51. The span at P23–I35 shows a compositional bias: gly residues.

Belongs to the universal ribosomal protein uL15 family. Part of the 50S ribosomal subunit.

Binds to the 23S rRNA. The sequence is that of Large ribosomal subunit protein uL15 from Cereibacter sphaeroides (strain ATCC 17025 / ATH 2.4.3) (Rhodobacter sphaeroides).